Here is a 315-residue protein sequence, read N- to C-terminus: DNA-directed RNA polymerase subunit alpha (315 aa).

The tract at residues 1-228 (MLEIEKPKIE…EHFKLFMTLT (228 aa)) is alpha N-terminal domain (alpha-NTD). Residues 245–315 (KEKVLEMTIE…LGLSLKLNDE (71 aa)) form an alpha C-terminal domain (alpha-CTD) region.

The protein belongs to the RNA polymerase alpha chain family. In terms of assembly, homodimer. The RNAP catalytic core consists of 2 alpha, 1 beta, 1 beta' and 1 omega subunit. When a sigma factor is associated with the core the holoenzyme is formed, which can initiate transcription.

The catalysed reaction is RNA(n) + a ribonucleoside 5'-triphosphate = RNA(n+1) + diphosphate. Functionally, DNA-dependent RNA polymerase catalyzes the transcription of DNA into RNA using the four ribonucleoside triphosphates as substrates. The polypeptide is DNA-directed RNA polymerase subunit alpha (Clostridium acetobutylicum (strain ATCC 824 / DSM 792 / JCM 1419 / IAM 19013 / LMG 5710 / NBRC 13948 / NRRL B-527 / VKM B-1787 / 2291 / W)).